Consider the following 67-residue polypeptide: Large ribosomal subunit protein uL29 (67 aa).

The protein belongs to the universal ribosomal protein uL29 family.

The protein is Large ribosomal subunit protein uL29 of Magnetococcus marinus (strain ATCC BAA-1437 / JCM 17883 / MC-1).